The following is a 117-amino-acid chain: Immunoglobulin heavy variable 1-3 (117 aa).

Residues 1-19 (MDWTWRILFLVAAATGAHS) form the signal peptide. A framework-1 region spans residues 20–44 (QVQLVQSGAEVKKPGASVKVSCKAS). The 98-residue stretch at 20–117 (QVQLVQSGAE…EDTAVYYCAR (98 aa)) folds into the Ig-like domain. Cys-41 and Cys-115 form a disulfide bridge. The segment at 45-52 (GYTFTSYA) is complementarity-determining-1. The framework-2 stretch occupies residues 53–69 (MHWVRQAPGQRLEWMGW). Residues 70–77 (INAGNGNT) form a complementarity-determining-2 region. A framework-3 region spans residues 78–115 (KYSQKFQGRVTITRDTSASTAYMELSSLRSEDTAVYYC). A complementarity-determining-3 region spans residues 116–117 (AR).

Immunoglobulins are composed of two identical heavy chains and two identical light chains; disulfide-linked.

The protein localises to the secreted. It localises to the cell membrane. Its function is as follows. V region of the variable domain of immunoglobulin heavy chains that participates in the antigen recognition. Immunoglobulins, also known as antibodies, are membrane-bound or secreted glycoproteins produced by B lymphocytes. In the recognition phase of humoral immunity, the membrane-bound immunoglobulins serve as receptors which, upon binding of a specific antigen, trigger the clonal expansion and differentiation of B lymphocytes into immunoglobulins-secreting plasma cells. Secreted immunoglobulins mediate the effector phase of humoral immunity, which results in the elimination of bound antigens. The antigen binding site is formed by the variable domain of one heavy chain, together with that of its associated light chain. Thus, each immunoglobulin has two antigen binding sites with remarkable affinity for a particular antigen. The variable domains are assembled by a process called V-(D)-J rearrangement and can then be subjected to somatic hypermutations which, after exposure to antigen and selection, allow affinity maturation for a particular antigen. The polypeptide is Immunoglobulin heavy variable 1-3 (Homo sapiens (Human)).